A 204-amino-acid chain; its full sequence is 8-oxoguanine DNA glycosylase/AP lyase (204 aa).

Catalysis depends on residues K129 and D147.

It belongs to the type-2 OGG1 family.

It catalyses the reaction 2'-deoxyribonucleotide-(2'-deoxyribose 5'-phosphate)-2'-deoxyribonucleotide-DNA = a 3'-end 2'-deoxyribonucleotide-(2,3-dehydro-2,3-deoxyribose 5'-phosphate)-DNA + a 5'-end 5'-phospho-2'-deoxyribonucleoside-DNA + H(+). Catalyzes the excision of an oxidatively damaged form of guanine (7,8-dihydro-8-oxoguanine = 8-oxoG) from DNA. Also cleaves the DNA backbone at apurinic/apyrimidinic sites (AP sites). Prefers oligomers containing 8-oxoG:C, 8-oxoG:T and 8-oxoG:G base pairs, and is less effective on oligomers containing 8-oxoG:A mispairs. The protein is 8-oxoguanine DNA glycosylase/AP lyase of Thermoplasma volcanium (strain ATCC 51530 / DSM 4299 / JCM 9571 / NBRC 15438 / GSS1).